Reading from the N-terminus, the 638-residue chain is Cytoplasmic dynein 1 intermediate chain 2 (638 aa).

2 stretches are compositionally biased toward basic and acidic residues: residues Met1–Arg13 and Gln20–Ala43. 2 disordered regions span residues Met1–Pro135 and Val154–Thr209. Ser2 bears the N-acetylserine mark. Ser51 is subject to Diphosphoserine. Phosphoserine is present on residues Ser51 and Ser90. Over residues Pro88–Ser97 the composition is skewed to low complexity. Residue Thr95 is modified to Phosphothreonine. Phosphoserine is present on residues Ser97, Ser101, and Ser104. The interaction with DYNLT1 stretch occupies residues Arg133–Thr165. Residues Glu190–Thr209 show a composition bias toward basic and acidic residues. 6 WD repeats span residues Ser277–Glu326, His330–Val370, Ala379–Asp420, Ser429–Ser469, Gly474–Ser519, and Glu568–Arg607.

This sequence belongs to the dynein intermediate chain family. Homodimer. The cytoplasmic dynein 1 complex consists of two catalytic heavy chains (HCs) and a number of non-catalytic subunits presented by intermediate chains (ICs), light intermediate chains (LICs) and light chains (LCs); the composition seems to vary in respect to the IC, LIC and LC composition. The heavy chain homodimer serves as a scaffold for the probable homodimeric assembly of the respective non-catalytic subunits. The ICs and LICs bind directly to the HC dimer and the LCs assemble on the IC dimer. Interacts with DYNLT3. Interacts with DYNLT1. Interacts (dephosphorylated at Ser-90) with DCTN1. Interacts with BICD2. Interacts with SPEF2. Interacts with CFAP61. In terms of processing, the phosphorylation status of Ser-90 appears to be involved in dynactin-dependent target binding. Pyrophosphorylation by 5-diphosphoinositol pentakisphosphate (5-IP7) promotes interaction with DCTN1. Serine pyrophosphorylation is achieved by Mg(2+)-dependent, but enzyme independent transfer of a beta-phosphate from a inositol pyrophosphate to a pre-phosphorylated serine residue. As to expression, skeletal muscle, testis, kidney, brain, heart and spleen.

Its subcellular location is the cytoplasm. It localises to the cytoskeleton. Acts as one of several non-catalytic accessory components of the cytoplasmic dynein 1 complex that are thought to be involved in linking dynein to cargos and to adapter proteins that regulate dynein function. Cytoplasmic dynein 1 acts as a motor for the intracellular retrograde motility of vesicles and organelles along microtubules. The intermediate chains mediate the binding of dynein to dynactin via its 150 kDa component (p150-glued) DCTN1. Involved in membrane-transport, such as Golgi apparatus, late endosomes and lysosomes. The chain is Cytoplasmic dynein 1 intermediate chain 2 (Dync1i2) from Rattus norvegicus (Rat).